Here is a 1129-residue protein sequence, read N- to C-terminus: MSNSRKMSEPPRFFVGPEDAEINPGNYRRFFHHAEEEEEEEDESPPERQIVVGICSMAKKSKSKPMKEILERISLFKYITVVVFEEEIILNEPVENWPLCDCLISFHSKGFPLDKAVAYAKLRNPFVINDLNMQYLIQDRRDVYSILQAEGILLPRYAILNRDPNNPKECNLIEGEDHVEVNGEVFQKPFVEKPVSAEDHNVYIYYPTSAGGGSQRLFRKIGSRSSVYSPESNVRKTGSYIYEEFMPTDGTDVKVYTVGPDYAHAEARKSPALDGKVERDSEGKEVRYPVILNAREKLIAWKVCLAFKQTVCGFDLLRANGQSYVCDVNGFSFVKNSMKYYDDCAKILGNIVMRELAPQFHIPWSIPLEAEDIPIVPTTSGTMMELRCVIAVIRHGDRTPKQKMKMEVRHQKFFDLFEKCDGYKSGKLKLKKPKQLQEVLDIARQLLMELGQNNDSEIEENKSKLEQLKTVLEMYGHFSGINRKVQLTYLPHGCPKTSSEEEDNRREEPSLLLVLKWGGELTPAGRVQAEELGRAFRCMYPGGQGDYAGFPGCGLLRLHSTYRHDLKIYASDEGRVQMTAAAFAKGLLALEGELTPILVQMVKSANMNGLLDSDSDSLSSCQQRVKARLHEILQKDRDFTAEDYEKLTPSGSISVIKSMHLIKNPVKTCDKVYSLIQSLTSQIRYRMEDPKSADIQLYHSETLELMLRRWSKLEKDFKTKNGRYDISKIPDIYDCIKYDVQHNGSLKLENTMELYRLSKALADIVIPQEYGITKAEKLEIAKGYCTPLVRKIRSDLQRTQDDDTVNKLHPVYSRGVLSPERHVRTRLYFTSESHVHSLLSILRYGALCDDSKDEQWKRAMDYLNVVNELNYMTQIVIMLYEDPNKDLSSEERFHVELHFSPGAKGCEEDKNLPSGYGYRPASRENEGRRSLKTDDDEPHTSKRDEVDRAVMLFKPLVSEPIHIHRKSPLPRSRKITANEVVSENANYLRTPRNLVEQKQNPTVGFELYSMVPSICPLETLHNALFLKQVDDFLASIASPSTEVLRKVPEMSSMATRSSPGMRRKISLNTYTPTKILPTPPAALKSSKASSKAAAGGPSQAMAPHTSSRKKSINSKTEGHEPKKSTGKKR.

The residue at position 44 (Ser-44) is a Phosphoserine. Position 59–60 (59–60 (KK)) interacts with substrate. The ATP site is built by Arg-140, Lys-193, His-200, and Arg-219. 219–220 (RK) contacts substrate. Ser-229 is subject to Phosphoserine. Residues 243–246 (EEFM) and 252–254 (DVK) contribute to the ATP site. Substrate is bound by residues Lys-254 and Arg-268. ATP contacts are provided by residues Ser-270, Asp-315, and 327 to 329 (DVN). Substrate is bound at residue 332-335 (SFVK). Residues 377–448 (PTTSGTMMEL…VLDIARQLLM (72 aa)) form a polyphosphoinositide-binding domain region. The interval 904 to 945 (KGCEEDKNLPSGYGYRPASRENEGRRSLKTDDDEPHTSKRDE) is disordered. The segment covering 921–945 (ASRENEGRRSLKTDDDEPHTSKRDE) has biased composition (basic and acidic residues). 3 positions are modified to phosphoserine: Ser-1051, Ser-1058, and Ser-1066. The segment at 1070-1129 (YTPTKILPTPPAALKSSKASSKAAAGGPSQAMAPHTSSRKKSINSKTEGHEPKKSTGKKR) is disordered. Low complexity predominate over residues 1081 to 1098 (AALKSSKASSKAAAGGPS). Residues Ser-1106 and Ser-1107 each carry the phosphoserine modification.

It belongs to the histidine acid phosphatase family. VIP1 subfamily. Ubiquitously expressed. Expressed in the cochlear and vestibular sensory hair cells, supporting cells and spiral ganglion neurons.

It is found in the cytoplasm. The protein resides in the cytosol. The enzyme catalyses 1D-myo-inositol hexakisphosphate + ATP = 1-diphospho-1D-myo-inositol 2,3,4,5,6-pentakisphosphate + ADP. It carries out the reaction 5-diphospho-1D-myo-inositol 1,2,3,4,6-pentakisphosphate + ATP + H(+) = 1,5-bis(diphospho)-1D-myo-inositol 2,3,4,6-tetrakisphosphate + ADP. Functionally, bifunctional inositol kinase that acts in concert with the IP6K kinases IP6K1, IP6K2 and IP6K3 to synthesize the diphosphate group-containing inositol pyrophosphates diphosphoinositol pentakisphosphate, PP-InsP5, and bis-diphosphoinositol tetrakisphosphate, (PP)2-InsP4. PP-InsP5 and (PP)2-InsP4, also respectively called InsP7 and InsP8, regulate a variety of cellular processes, including apoptosis, vesicle trafficking, cytoskeletal dynamics, exocytosis, insulin signaling and neutrophil activation. Phosphorylates inositol hexakisphosphate (InsP6) at position 1 to produce PP-InsP5 which is in turn phosphorylated by IP6Ks to produce (PP)2-InsP4. Alternatively, phosphorylates PP-InsP5 at position 1, produced by IP6Ks from InsP6, to produce (PP)2-InsP4. Required for normal hearing. This Mus musculus (Mouse) protein is Inositol hexakisphosphate and diphosphoinositol-pentakisphosphate kinase 2.